The sequence spans 273 residues: Kit ligand (273 aa).

Residues 1 to 25 (MKKTQTWIITCIYLQLLLFNPLVKT) form the signal peptide. Residues 26–214 (KEICGNPVTD…AKAPEDSGLQ (189 aa)) lie on the Extracellular side of the membrane. 2 disulfides stabilise this stretch: cysteine 29–cysteine 114 and cysteine 68–cysteine 163. Asparagine 90, asparagine 97, asparagine 145, and asparagine 195 each carry an N-linked (GlcNAc...) asparagine glycan. A disordered region spans residues 190–210 (ASSLRNDSSSSNRKAAKAPED). Residues 191-202 (SSLRNDSSSSNR) show a composition bias toward low complexity. A helical membrane pass occupies residues 215-237 (WTAMALPALISLVIGFAFGALYW). Topologically, residues 238 to 273 (KKKQSSLTRAVENIQINEEDNEISMLQQKEREFQEV) are cytoplasmic.

It belongs to the SCF family. As to quaternary structure, homodimer, non-covalently linked. Heterotetramer with KIT, binding two KIT molecules; thereby mediates KIT dimerization and subsequent activation by autophosphorylation. In terms of processing, a soluble form is produced by proteolytic processing of isoform 1 in the extracellular domain. As to expression, expressed in the cochlea.

The protein resides in the cell membrane. It is found in the cytoplasm. Its subcellular location is the cytoskeleton. The protein localises to the cell projection. It localises to the lamellipodium. The protein resides in the filopodium. It is found in the secreted. In terms of biological role, ligand for the receptor-type protein-tyrosine kinase KIT. Plays an essential role in the regulation of cell survival and proliferation, hematopoiesis, stem cell maintenance, gametogenesis, mast cell development, migration and function, and in melanogenesis. KITLG/SCF binding can activate several signaling pathways. Promotes phosphorylation of PIK3R1, the regulatory subunit of phosphatidylinositol 3-kinase, and subsequent activation of the kinase AKT1. KITLG/SCF and KIT also transmit signals via GRB2 and activation of RAS, RAF1 and the MAP kinases MAPK1/ERK2 and/or MAPK3/ERK1. KITLG/SCF and KIT promote activation of STAT family members STAT1, STAT3 and STAT5. KITLG/SCF and KIT promote activation of PLCG1, leading to the production of the cellular signaling molecules diacylglycerol and inositol 1,4,5-trisphosphate. KITLG/SCF acts synergistically with other cytokines, probably interleukins. The sequence is that of Kit ligand (Kitlg) from Mus musculus (Mouse).